The chain runs to 221 residues: N-(5'-phosphoribosyl)anthranilate isomerase (221 aa).

The protein belongs to the TrpF family.

It carries out the reaction N-(5-phospho-beta-D-ribosyl)anthranilate = 1-(2-carboxyphenylamino)-1-deoxy-D-ribulose 5-phosphate. It functions in the pathway amino-acid biosynthesis; L-tryptophan biosynthesis; L-tryptophan from chorismate: step 3/5. The polypeptide is N-(5'-phosphoribosyl)anthranilate isomerase (Chlorobaculum parvum (strain DSM 263 / NCIMB 8327) (Chlorobium vibrioforme subsp. thiosulfatophilum)).